The sequence spans 501 residues: Solute carrier family 2, facilitated glucose transporter member 5 (501 aa).

Residue Met-1 is modified to N-acetylmethionine. The Cytoplasmic portion of the chain corresponds to 1–18; it reads MEPQDPVKREGRLTPVIV. Residues 19-39 form a helical membrane-spanning segment; it reads LATLIAAFGSSFQYGYNVATI. Tyr-32 is a D-fructose binding site. Topologically, residues 40–68 are extracellular; the sequence is NSPSEFMKDFYNYTYYDRVGEYMNEFYLT. Asn-51 carries N-linked (GlcNAc...) asparagine glycosylation. Residues 69-91 form a helical membrane-spanning segment; it reads LLWSVTVSMFPFGGFLGSLMVGP. Residues 92–98 are Cytoplasmic-facing; the sequence is LVNNLGR. Residues 99–119 traverse the membrane as a helical segment; sequence KGTLLFNNIFSIVPALLMGFS. Residues 120 to 126 lie on the Extracellular side of the membrane; it reads DLAKSFE. The chain crosses the membrane as a helical span at residues 127-149; that stretch reads MIIVARVLVGICAGLSSNVVPMY. Topologically, residues 150 to 161 are cytoplasmic; the sequence is LGELAPKNWRGA. A helical membrane pass occupies residues 162 to 182; sequence LGVVPQLFITIGILVAQIFGL. D-fructose is bound at residue Gln-167. The Extracellular portion of the chain corresponds to 183–192; sequence RSLLANEEGW. The helical transmembrane segment at 193–213 threads the bilayer; sequence PILLGLTGIPAVLQLLFLPFF. Residues 214 to 277 are Cytoplasmic-facing; sequence PESPRYLLIQ…LFKMRSLRWQ (64 aa). A helical membrane pass occupies residues 278-298; that stretch reads VISIIVLMAGQQLSGVNAIYY. D-fructose is bound by residues Gln-288 and 296-298; that span reads IYY. Residues 299–313 lie on the Extracellular side of the membrane; sequence YADQIYLSAGVKEDD. A helical transmembrane segment spans residues 314–334; that stretch reads VQYVTAGTGAVNVLITVCAIF. Over 335–342 the chain is Cytoplasmic; that stretch reads VVELMGRR. The chain crosses the membrane as a helical span at residues 343–363; the sequence is FLLLLGFSVCFTACCVLTGAL. The Extracellular segment spans residues 364–371; it reads AMQDVISW. A helical membrane pass occupies residues 372–394; the sequence is MPYVSIACVISYVIGHALGPSPI. His-387 contacts D-fructose. At 395 to 412 the chain is on the cytoplasmic side; sequence PALLVTEIFLQSSRPAAY. A helical transmembrane segment spans residues 413 to 433; sequence MVAGTVHWLSNFTVGLVFPFI. A D-fructose-binding site is contributed by 419 to 420; the sequence is HW. Residues 434 to 439 lie on the Extracellular side of the membrane; the sequence is QVGLGA. A helical membrane pass occupies residues 440–460; it reads YSFVIFAVICFLTTVYIFLII. Residues 461-501 lie on the Cytoplasmic side of the membrane; that stretch reads PETKSKTFIEINQIFIKMNKVPGVHPEKEELKEFPPSTARQ.

This sequence belongs to the major facilitator superfamily. Sugar transporter (TC 2.A.1.1) family. Glucose transporter subfamily.

The protein localises to the apical cell membrane. The protein resides in the cell membrane. Its subcellular location is the sarcolemma. It catalyses the reaction D-fructose(out) = D-fructose(in). Functionally, functions as a fructose transporter that has only low activity with other monosaccharides. Can mediate the uptake of deoxyglucose, but with low efficiency. Essential for fructose uptake in the small intestine. Plays a role in the regulation of salt uptake and blood pressure in response to dietary fructose. Required for the development of high blood pressure in response to high dietary fructose intake. This chain is Solute carrier family 2, facilitated glucose transporter member 5, found in Ovis aries (Sheep).